The sequence spans 76 residues: MKVLSLIFVIFSVLVLFASAKDPVCDQPKAVGRCFAAFPKFYFNSSSAQGEAFFYGGCGGNENNFNTLEECNAKCA.

The N-terminal stretch at 1 to 20 is a signal peptide; that stretch reads MKVLSLIFVIFSVLVLFASA. The BPTI/Kunitz inhibitor domain occupies 25–75; that stretch reads CDQPKAVGRCFAAFPKFYFNSSSAQGEAFFYGGCGGNENNFNTLEECNAKC. 2 disulfide bridges follow: Cys-25–Cys-75 and Cys-34–Cys-58.

In terms of tissue distribution, expressed in salivary glands.

Its subcellular location is the secreted. In terms of biological role, potent anticoagulant protein that inhibits the hydrolytic activities of all serine proteases tested (trypsin, thrombin, elastase, and chymotrypsin), with the highest efficacy on thrombin. The chain is Tabkunin 4 from Tabanus yao (Horsefly).